Here is a 431-residue protein sequence, read N- to C-terminus: UPF0597 protein TDE_2144 (431 aa).

This sequence belongs to the UPF0597 family.

The protein is UPF0597 protein TDE_2144 of Treponema denticola (strain ATCC 35405 / DSM 14222 / CIP 103919 / JCM 8153 / KCTC 15104).